The chain runs to 348 residues: Flagellar P-ring protein (348 aa).

The first 16 residues, 1–16, serve as a signal peptide directing secretion; it reads MRVLTIFLLFMTSIFA.

It belongs to the FlgI family. The basal body constitutes a major portion of the flagellar organelle and consists of four rings (L,P,S, and M) mounted on a central rod.

Its subcellular location is the periplasm. It is found in the bacterial flagellum basal body. In terms of biological role, assembles around the rod to form the L-ring and probably protects the motor/basal body from shearing forces during rotation. The polypeptide is Flagellar P-ring protein (Campylobacter jejuni subsp. jejuni serotype O:23/36 (strain 81-176)).